The following is a 30-amino-acid chain: Cyclotide hyen-C (30 aa).

Residues G1 to N30 constitute a cross-link (cyclopeptide (Gly-Asn)). Disulfide bonds link C5–C20, C9–C22, and C15–C27.

This is a cyclic peptide. As to expression, detected in stems (at protein level).

Probably participates in a plant defense mechanism. Does not display any cytotoxic activity towards K562, HeLa, MCF-7, HUVEC or red blood cells. Does not bind to phospholipd membranes containing 1-palmitoyl 2-oleoyl phosphatidylcholine (POPC) or 1-palmitoyl-2-oleophosphatidylethanolamine (POPE). The protein is Cyclotide hyen-C of Pigea enneasperma (Spade flower).